The following is a 203-amino-acid chain: Small ribosomal subunit protein uS4 (203 aa).

An S4 RNA-binding domain is found at 93-156 (RRLDNVVYRL…AKVPAILEAV (64 aa)).

Belongs to the universal ribosomal protein uS4 family. In terms of assembly, part of the 30S ribosomal subunit. Contacts protein S5. The interaction surface between S4 and S5 is involved in control of translational fidelity.

In terms of biological role, one of the primary rRNA binding proteins, it binds directly to 16S rRNA where it nucleates assembly of the body of the 30S subunit. Functionally, with S5 and S12 plays an important role in translational accuracy. This Streptococcus thermophilus (strain CNRZ 1066) protein is Small ribosomal subunit protein uS4.